The following is a 423-amino-acid chain: MVVAILRVVSAIEIPIRLGFSEANWRFSSPKYDNLGRKKSRLSVYSLYTTSKYACVGFEAENNGKFLIRSSLVANPAGEATISSEQKVYDVVLKQAALVKDQTKSSRKSTDVKPDIVLPGTVYLLKDAYDRCGEVCAEYAKTFYLGTLLMTPERRRAIWAIYVWCRRTDELVDGHNASHITPSALDRWEARLEDLFAGRPYDMFDAALSDTVSRFPVDIQPFMDMVEGMRMDLKKSRYKNFDELYLYCYYVAGTVGLMSVPVMGIAPESLAEAESVYNAALALGIANQLTNILRDVGEDARRGRIYLPQDELAEAGLSDEDVFTGKVTDKWRSFMKRQIKRARTFFEQAEKGVTELSQASRWPVWASLLLYRQILDEIEANDYNNFTKRAYVSKVKRLAALPLAYGKSLLIPLSLRPPSLSKA.

A chloroplast-targeting transit peptide spans 1 to 136; the sequence is MVVAILRVVS…DAYDRCGEVC (136 aa).

The protein belongs to the phytoene/squalene synthase family. Monomer.

The protein resides in the plastid. It is found in the chloroplast. The enzyme catalyses 2 (2E,6E,10E)-geranylgeranyl diphosphate = 15-cis-phytoene + 2 diphosphate. It functions in the pathway carotenoid biosynthesis; phytoene biosynthesis; all-trans-phytoene from geranylgeranyl diphosphate: step 1/1. Functionally, catalyzes the reaction from prephytoene diphosphate to phytoene. The protein is Phytoene synthase, chloroplastic (PSY) of Narcissus pseudonarcissus (Daffodil).